The sequence spans 1519 residues: Rho guanine nucleotide exchange factor 40 (1519 aa).

Disordered stretches follow at residues 194–237 (VGHQ…PVEG) and 253–503 (RGSP…LETV). Residues 200–218 (TLPPELPSGPPGLPSPPLP) are compositionally biased toward pro residues. The residue at position 262 (S262) is a Phosphoserine. Residues 280–290 (KGRHRRHRAWM) are compositionally biased toward basic residues. Residues 314–341 (ASPESPPGAEAVPEAAVLEVSEPPAEAV) are compositionally biased toward low complexity. Positions 355 to 367 (LRGGGGGGQGAEG) are enriched in gly residues. T371 carries the post-translational modification Phosphothreonine. The segment covering 374-386 (RTGKGNRRKKRAA) has biased composition (basic residues). S419 is modified (phosphoserine). Over residues 421 to 457 (SEHKLPECHLVKEEYEGSGKPESEPKELKTAGEKEPQ) the composition is skewed to basic and acidic residues. Positions 828–871 (SAEVQERLAQAREALALEENATSQKVLDIFEQRLEQVESGLHRA) form a coiled coil. S931 and S961 each carry phosphoserine. A coiled-coil region spans residues 934-961 (ALREWGRCQARCQELERRIQQHVGEEAS). Residues 955–1031 (HVGEEASPRG…ELAPEAEGRP (77 aa)) form a disordered region. Residues 980 to 996 (WGPRSPSPSLSSLLLPS) are compositionally biased toward low complexity. Position 1082 is a phosphoserine (S1082). In terms of domain architecture, DH spans 1085–1253 (AQQRLVSELI…REQEARGRDL (169 aa)). Residues 1265-1372 (DLKEQGQLLH…WTSSIAQLLW (108 aa)) enclose the PH domain. 3 positions are modified to phosphoserine: S1433, S1438, and S1474. Positions 1466 to 1519 (TLDSSGDVSPGPRNSPSLQPPHPGSSTPTLASRGILGLSRQSHARALSDPTTPL) are disordered. The span at 1467 to 1482 (LDSSGDVSPGPRNSPS) shows a compositional bias: polar residues. Phosphothreonine is present on T1492.

In terms of tissue distribution, expressed at higher level in the central nervous system and skeletal muscle and greater abundance in fetal than adult brain (at protein level).

The protein localises to the cytoplasm. Functionally, may act as a guanine nucleotide exchange factor (GEF). The protein is Rho guanine nucleotide exchange factor 40 (ARHGEF40) of Homo sapiens (Human).